A 95-amino-acid polypeptide reads, in one-letter code: uncharacterized protein (95 aa).

An ABM domain is found at V2 to F92.

This is an uncharacterized protein from Bacillus subtilis (strain 168).